We begin with the raw amino-acid sequence, 345 residues long: MYHHDSGPHIEEVFDPPSRRTMMQEIETHPDVIAFGKKLRKIKNQPESTFLSSADRMEEIIDAFRDQIAKWEEEEELNEPCEYRQLKIEIFTQKKIEYQRKNNLAVDEFYKKRNLKNHSNRKPLEESRRREEPRDRVHESNIDITHRGDSTSLNHYSRHHYSQRQSQSSRFERERESDEEEENSQPIQRYRSRSPKPSYSYNQSTMQQSQRDDTNVYHRSHQSTSQPPQVRMRSGKSRVTKTHNRKFRPGQKALAEIRKYQKSTDMLIQKAPFVRLVHEIIREQTYKSQDYRIRADALMALQEAAEAFMVEMFEGSVLICNHAKRVTLMPTDIQLYRRLCLRNLS.

The tract at residues 117-246 (NHSNRKPLEE…SRVTKTHNRK (130 aa)) is disordered. Basic and acidic residues predominate over residues 122 to 149 (KPLEESRRREEPRDRVHESNIDITHRGD). Positions 233 to 246 (RSGKSRVTKTHNRK) are enriched in basic residues. The tract at residues 263–340 (STDMLIQKAP…TDIQLYRRLC (78 aa)) is H3-like.

Belongs to the histone H3 family. In terms of assembly, forms a nucleosome-like histone octamer containing two molecules each of H2A, H2B, cpar-1 and H4 assembled in one cpar-1-H4 heterotetramer and two H2A-H2B heterodimers. In terms of processing, cleaved at the onset of meiotic anaphase I, likely by separase sep-1.

The protein resides in the nucleus. The protein localises to the chromosome. Its function is as follows. Histone H3-like variant which exclusively replaces conventional H3 in the nucleosome core of centromeric chromatin at the inner plate of the kinetochore. Required for recruitment and assembly of kinetochore proteins, mitotic progression and chromosome segregation. May serve as an epigenetic mark that propagates centromere identity through replication and cell division. Not required for chromosome segregation during meiosis. The chain is Histone H3-like centromeric protein cpar-1 from Caenorhabditis briggsae.